The chain runs to 200 residues: FMN-dependent NADH:quinone oxidoreductase 2 (200 aa).

Residue 135 to 138 participates in FMN binding; that stretch reads SRGG.

Belongs to the azoreductase type 1 family. Homodimer. Requires FMN as cofactor.

The catalysed reaction is 2 a quinone + NADH + H(+) = 2 a 1,4-benzosemiquinone + NAD(+). It catalyses the reaction N,N-dimethyl-1,4-phenylenediamine + anthranilate + 2 NAD(+) = 2-(4-dimethylaminophenyl)diazenylbenzoate + 2 NADH + 2 H(+). Functionally, quinone reductase that provides resistance to thiol-specific stress caused by electrophilic quinones. In terms of biological role, also exhibits azoreductase activity. Catalyzes the reductive cleavage of the azo bond in aromatic azo compounds to the corresponding amines. The protein is FMN-dependent NADH:quinone oxidoreductase 2 of Clostridium acetobutylicum (strain ATCC 824 / DSM 792 / JCM 1419 / IAM 19013 / LMG 5710 / NBRC 13948 / NRRL B-527 / VKM B-1787 / 2291 / W).